The following is a 162-amino-acid chain: Probable chemoreceptor glutamine deamidase CheD (162 aa).

This sequence belongs to the CheD family.

The enzyme catalyses L-glutaminyl-[protein] + H2O = L-glutamyl-[protein] + NH4(+). Its function is as follows. Probably deamidates glutamine residues to glutamate on methyl-accepting chemotaxis receptors (MCPs), playing an important role in chemotaxis. The protein is Probable chemoreceptor glutamine deamidase CheD of Clostridium botulinum (strain Alaska E43 / Type E3).